The chain runs to 145 residues: LIM domain only protein 3 (145 aa).

LIM zinc-binding domains follow at residues 11-73 (KGCA…LFGV) and 75-137 (GNCA…GLMK).

The polypeptide is LIM domain only protein 3 (LMO3) (Bos taurus (Bovine)).